We begin with the raw amino-acid sequence, 340 residues long: Entry-fusion complex protein OPG094 (340 aa).

Glycine 2 carries N-myristoyl glycine; by host lipidation. At 2–319 the chain is on the virion surface side; the sequence is GGRVSVELPK…VQHNIKHSFD (318 aa). A helical; Signal-anchor for type II membrane protein membrane pass occupies residues 320-340; that stretch reads LKLHLISLLSLLVIWILIVAI.

The protein belongs to the orthopoxvirus OPG086 family. Interacts with OPG143. Component of the entry fusion complex (EFC) composed of OPG053, OPG076, OPG086, OPG094, OPG095, OPG099, OPG107, OPG143, OPG104, OPG147 and OPG155. Except for OPG095 and OPG053, each of the EFC proteins is required for assembly or stability of the complex. Post-translationally, unglycosylated because produced in viral factories instead of the classic ER -Golgi route.

The protein resides in the virion membrane. In terms of biological role, component of the entry fusion complex (EFC), which consists of 11 proteins. During cell infection, this complex mediates entry of the virion core into the host cytoplasm by a two-step mechanism consisting of lipid mixing of the viral and cellular membranes and subsequent pore formation. This chain is Entry-fusion complex protein OPG094 (OPG094), found in Homo sapiens (Human).